The following is a 328-amino-acid chain: DNA-directed RNA polymerase subunit alpha (328 aa).

Residues 1–235 are alpha N-terminal domain (alpha-NTD); that stretch reads MQGSVTEFLK…EQLDAFVDLR (235 aa). The tract at residues 249-328 is alpha C-terminal domain (alpha-CTD); sequence FDPILLRPVD…ENWPPASLAE (80 aa).

The protein belongs to the RNA polymerase alpha chain family. Homodimer. The RNAP catalytic core consists of 2 alpha, 1 beta, 1 beta' and 1 omega subunit. When a sigma factor is associated with the core the holoenzyme is formed, which can initiate transcription.

The enzyme catalyses RNA(n) + a ribonucleoside 5'-triphosphate = RNA(n+1) + diphosphate. Its function is as follows. DNA-dependent RNA polymerase catalyzes the transcription of DNA into RNA using the four ribonucleoside triphosphates as substrates. The polypeptide is DNA-directed RNA polymerase subunit alpha (Pseudoalteromonas translucida (strain TAC 125)).